The sequence spans 195 residues: E3 ubiquitin-protein ligase ZNRF1 (195 aa).

Residues 1 to 10 (MGGKQSSASR) show a composition bias toward polar residues. Disordered regions lie at residues 1 to 36 (MGGKQSSASRSRAPFPGVSSDDSAVPPSSNFGHFRA) and 61 to 84 (PFGLYRAGPDTERGGSSGSEDSRG). The N-myristoyl glycine moiety is linked to residue Gly2. Positions 18–29 (VSSDDSAVPPSS) are enriched in low complexity. The RING-type; atypical zinc finger occupies 152-193 (CVICLEELSQGDTIARLPCLCIYHKSCIDSWFEVNRCCPEHP).

The protein resides in the endosome. It localises to the lysosome. Its subcellular location is the membrane. It catalyses the reaction S-ubiquitinyl-[E2 ubiquitin-conjugating enzyme]-L-cysteine + [acceptor protein]-L-lysine = [E2 ubiquitin-conjugating enzyme]-L-cysteine + N(6)-ubiquitinyl-[acceptor protein]-L-lysine.. Its pathway is protein modification; protein ubiquitination. Functionally, E3 ubiquitin-protein ligase that plays a role in neuron cells differentiation. Plays a role in the establishment and maintenance of neuronal transmission and plasticity. This Xenopus tropicalis (Western clawed frog) protein is E3 ubiquitin-protein ligase ZNRF1 (znrf1).